The chain runs to 314 residues: Methionyl-tRNA formyltransferase (314 aa).

A (6S)-5,6,7,8-tetrahydrofolate-binding site is contributed by Ser113–Pro116.

The protein belongs to the Fmt family.

It carries out the reaction L-methionyl-tRNA(fMet) + (6R)-10-formyltetrahydrofolate = N-formyl-L-methionyl-tRNA(fMet) + (6S)-5,6,7,8-tetrahydrofolate + H(+). In terms of biological role, attaches a formyl group to the free amino group of methionyl-tRNA(fMet). The formyl group appears to play a dual role in the initiator identity of N-formylmethionyl-tRNA by promoting its recognition by IF2 and preventing the misappropriation of this tRNA by the elongation apparatus. The protein is Methionyl-tRNA formyltransferase of Pseudomonas savastanoi pv. phaseolicola (strain 1448A / Race 6) (Pseudomonas syringae pv. phaseolicola (strain 1448A / Race 6)).